Here is a 126-residue protein sequence, read N- to C-terminus: MNFPQNLKYTNEHEWIRVEGDIAYVGITDYAQEQLGDIVFVDIPTVGETLEAGETFGTIEVVKTISDLFLPLAGEILEQNEALEENPELVNKDPYGEGWLIKMKPADASAAEDLLDAEAYKAVVNG.

One can recognise a Lipoyl-binding domain in the interval 22-104 (IAYVGITDYA…YGEGWLIKMK (83 aa)). The residue at position 63 (Lys63) is an N6-lipoyllysine.

Belongs to the GcvH family. The glycine cleavage system is composed of four proteins: P, T, L and H. Requires (R)-lipoate as cofactor.

Its function is as follows. The glycine cleavage system catalyzes the degradation of glycine. The H protein shuttles the methylamine group of glycine from the P protein to the T protein. The chain is Glycine cleavage system H protein from Bacteroides thetaiotaomicron (strain ATCC 29148 / DSM 2079 / JCM 5827 / CCUG 10774 / NCTC 10582 / VPI-5482 / E50).